The sequence spans 227 residues: MACTKTLQQSQPISAGATTTTTAVAPAGGHSGSTECDLECLVCREPYSCPRLPKLLACQHAFCAICLKLLLCVQDNTWSITCPLCRKVTAVPGGLICSLRDHEAVVGQLAQPCTEVSLCPQGLVDPADLAAGHPSLVGEDGQDEVSANHVAARRLAAHLLLLALLIILIGPFIYPGVLRWVLTFIIALALLMSTLFCCLPSTRGSCWPSSRTLFCREQKHSHISSIA.

Residues 40–86 (CLVCREPYSCPRLPKLLACQHAFCAICLKLLLCVQDNTWSITCPLCR) form an RING-type zinc finger. 2 helical membrane-spanning segments follow: residues 158–178 (HLLL…PGVL) and 180–200 (WVLT…CCLP).

In terms of assembly, interacts with BNIP1. In terms of processing, polyubiquitinated. 'Lys-29'-linked autoubiquitination leads to proteasomal degradation.

It localises to the endoplasmic reticulum membrane. The catalysed reaction is S-ubiquitinyl-[E2 ubiquitin-conjugating enzyme]-L-cysteine + [acceptor protein]-L-lysine = [E2 ubiquitin-conjugating enzyme]-L-cysteine + N(6)-ubiquitinyl-[acceptor protein]-L-lysine.. Its pathway is protein modification; protein ubiquitination. E3 ubiquitin protein ligase that is part of an apoptotic signaling pathway activated by endoplasmic reticulum stress. Stimulates the expression of proteins specific of the unfolded protein response (UPR), ubiquitinates BNIP1 and regulates its localization to the mitochondrion and induces calcium release from the endoplasmic reticulum that ultimately leads to cell apoptosis. Plays a role in the maintenance of intestinal homeostasis and clearance of enteric pathogens. Upon NOD2 stimulation, ubiquitinates the ER stress sensor activating transcription factor 6/ATF6 and promotes the unfolded protein response UPR. Participates in basal level of autophagy maintenance by regulating the ubiquitination of EPHB2 and EPHB3. Upon stimulation by ligand EFNB1, ubiquitinates EPHB2 and further recruits MAP1LC3B for autophagy induction. Controls nutrient sensing by ubiquitinating Sestrin-2/SESN2, which is an intracellular sensor of cytosolic leucine and inhibitor of mTORC1 activity. This is E3 ubiquitin-protein ligase RNF186 from Homo sapiens (Human).